The primary structure comprises 607 residues: MAGFPGKEAGPPGGWRKCQEDESPENERHENFYAEIDDFAPSVLTPTGSDSGAGEEDDDGLYQVPTHWPPLMAPTGLSGERVPCRTQAAVTSNTGNSPGSRHTSCPFTLPRGAQPPAPAHQKPTAPTPKPRSRECGPSKTPDPFSWFRKTSCTEGGADSTSRSFMYQKGFEEGLAGLGLDDKSDCESEDESNFRRPSSHSALKQKNGGKGKPSGLFEHLAAHGREFSKLSKHAAQLKRLSGSVMNVLNLDDAQDTRQAKAQRKESTRVPIVIHLTNHVPVIKPACSLFLEGAPGVGKTTMLNHLKAVFGDLTIVVPEPMRYWTHVYENAIKAMHKNVTRARHGREDTSAEVLACQMKFTTPFRVLASRKRSLLVTESGARSVAPLDCWILHDRHLLSASVVFPLMLLRSQLLSYSDFIQVLATFTADPGDTIVWMKLNVEENMRRLKKRGRKHESGLDAGYLKSVNDAYHAVYCAWLLTQYFAPEDIVKVCAGLTTITTVCHQSHTPIIRSGVAEKLYKNSIYSVLKEVIQPYRADAVLLEVCLAFTRTLAYLQFVLVDLSEFQDDLPGCWTEIYMQALKNPAIRSQFFDWAGLSKVISDFERGNRD.

Disordered stretches follow at residues 1-160 (MAGF…ADST) and 180-215 (DDKSDCESEDESNFRRPSSHSALKQKNGGKGKPSGL). The span at 17–32 (KCQEDESPENERHENF) shows a compositional bias: basic and acidic residues. Polar residues-rich tracts occupy residues 88–106 (AAVTSNTGNSPGSRHTSCP), 148–160 (RKTSCTEGGADST), and 194–203 (RRPSSHSALK). Residue 291 to 298 (GAPGVGKT) participates in ATP binding. Catalysis depends on E317, which acts as the Proton acceptor. Substrate is bound at residue Q355. ATP is bound at residue R445. R451 provides a ligand contact to substrate.

It belongs to the herpesviridae thymidine kinase family. In terms of assembly, homodimer.

The protein resides in the virion tegument. It is found in the host nucleus. The catalysed reaction is thymidine + ATP = dTMP + ADP + H(+). Its function is as follows. Catalyzes the transfer of the gamma-phospho group of ATP to thymidine to generate dTMP in the salvage pathway of pyrimidine synthesis. The dTMP serves as a substrate for DNA polymerase during viral DNA replication. Allows the virus to be reactivated and to grow in non-proliferative cells lacking a high concentration of phosphorylated nucleic acid precursors. This Epstein-Barr virus (strain GD1) (HHV-4) protein is Thymidine kinase.